A 565-amino-acid polypeptide reads, in one-letter code: Proline--tRNA ligase (565 aa).

This sequence belongs to the class-II aminoacyl-tRNA synthetase family. ProS type 1 subfamily. As to quaternary structure, homodimer.

Its subcellular location is the cytoplasm. The enzyme catalyses tRNA(Pro) + L-proline + ATP = L-prolyl-tRNA(Pro) + AMP + diphosphate. In terms of biological role, catalyzes the attachment of proline to tRNA(Pro) in a two-step reaction: proline is first activated by ATP to form Pro-AMP and then transferred to the acceptor end of tRNA(Pro). As ProRS can inadvertently accommodate and process non-cognate amino acids such as alanine and cysteine, to avoid such errors it has two additional distinct editing activities against alanine. One activity is designated as 'pretransfer' editing and involves the tRNA(Pro)-independent hydrolysis of activated Ala-AMP. The other activity is designated 'posttransfer' editing and involves deacylation of mischarged Ala-tRNA(Pro). The misacylated Cys-tRNA(Pro) is not edited by ProRS. This Lactobacillus helveticus (strain DPC 4571) protein is Proline--tRNA ligase.